A 688-amino-acid chain; its full sequence is GTPase IMAP family member 8 (688 aa).

The disordered stretch occupies residues 22-44; the sequence is TSIGQGERPRASRGQESNFKQSQ. Over residues 35–44 the composition is skewed to polar residues; sequence GQESNFKQSQ. AIG1-type G domains follow at residues 46–246, 281–471, and 472–681; these read TSTL…TENS, TPEL…VIRE, and KELL…SAVG. The G1 stretch occupies residues 55–62; that stretch reads GKQGAGKS. Residues 55 to 63 and Ser76 each bind GTP; that span reads GKQGAGKSA. A G2 region spans residues 82 to 86; sequence MVTKR. The G3 stretch occupies residues 103-106; sequence DTPD. Residues 171–174 are G4; the sequence is TRED. GTP-binding positions include 172-174 and Asn208; that span reads RED. Residues 207–209 form a G5 region; sequence NNK.

This sequence belongs to the TRAFAC class TrmE-Era-EngA-EngB-Septin-like GTPase superfamily. AIG1/Toc34/Toc159-like paraseptin GTPase family. IAN subfamily. Spleen, thymus and T-cells. Greatly reduced in T-cells from lymphopenic rats.

The protein resides in the endoplasmic reticulum. Its subcellular location is the golgi apparatus. It localises to the mitochondrion. It is found in the cytoplasm. The protein localises to the cytosol. Its function is as follows. Exerts an anti-apoptotic effect in the immune system and is involved in responses to infections. This chain is GTPase IMAP family member 8 (Gimap8), found in Rattus norvegicus (Rat).